A 204-amino-acid polypeptide reads, in one-letter code: Phosphoheptose isomerase (204 aa).

The 162-residue stretch at methionine 38 to proline 199 folds into the SIS domain. Asparagine 53–glycine 55 contributes to the substrate binding site. Residues histidine 62 and glutamate 66 each contribute to the Zn(2+) site. Substrate-binding positions include glutamate 66, asparagine 95–aspartate 96, serine 121–serine 123, serine 126, and glutamine 172. Residues glutamine 172 and histidine 180 each contribute to the Zn(2+) site.

It belongs to the SIS family. GmhA subfamily. As to quaternary structure, homotetramer. Zn(2+) serves as cofactor.

It localises to the cytoplasm. It catalyses the reaction 2 D-sedoheptulose 7-phosphate = D-glycero-alpha-D-manno-heptose 7-phosphate + D-glycero-beta-D-manno-heptose 7-phosphate. It functions in the pathway carbohydrate biosynthesis; D-glycero-D-manno-heptose 7-phosphate biosynthesis; D-glycero-alpha-D-manno-heptose 7-phosphate and D-glycero-beta-D-manno-heptose 7-phosphate from sedoheptulose 7-phosphate: step 1/1. Functionally, catalyzes the isomerization of sedoheptulose 7-phosphate in D-glycero-D-manno-heptose 7-phosphate. The polypeptide is Phosphoheptose isomerase (Solidesulfovibrio magneticus (strain ATCC 700980 / DSM 13731 / RS-1) (Desulfovibrio magneticus)).